The chain runs to 523 residues: Flavonoid 3',5'-hydroxylase (523 aa).

Residue Cys-460 participates in heme binding.

The protein belongs to the cytochrome P450 family. Heme serves as cofactor.

The enzyme catalyses a 3',5'-unsubstituted flavanone + 2 reduced [NADPH--hemoprotein reductase] + 2 O2 = a 3',5'-dihydroxyflavanone + 2 oxidized [NADPH--hemoprotein reductase] + 2 H2O + 2 H(+). It functions in the pathway pigment biosynthesis; anthocyanin biosynthesis. Catalyzes the 3'5'-hydroxylation of naringenin and eriodictyol to form 5,7,3,'4',5'-pentahydroxyflavanone and 3',5'-hydroxylation of dihydrokaempferol and dihydroquercetin to form dihydromyricetin. The chain is Flavonoid 3',5'-hydroxylase (CYP75A6) from Campanula medium (Canterbury bells).